A 127-amino-acid chain; its full sequence is uncharacterized protein (127 aa).

This is an uncharacterized protein from Haemophilus influenzae (strain ATCC 51907 / DSM 11121 / KW20 / Rd).